Consider the following 500-residue polypeptide: MAAASVSAASGSHLSNSFAEPSRSNGSMVRHSSSPYVVYPSDKPFLNSDLRRSPSKPTLAYPESNSRAIFSALKNLQDKIRRLELERIQAEESVKTLSRETIEYKKVLDEQIQERENSKNEESKHNQELTSQLLAAENKCNLLEKQLEYMRNMIKHAEMERTSVLEKQVSLERERQHDQTHVQSQLEKLDLLEQEYNKLTTMQALAEKKMQELEAKLHEEEQERKRMQAKAAELQTGLETNRLIFEDKATPCVPNARRIKKKKSKPPEKKSSRNYFGAQPHYRLCLGDMPFVAGKSTSPSHAVVANVQLVLHLMKQHSKALCNDRVINSIPLAKQVSSRGGKSKKLSVTPPSSNGINEELSEVLQTLQDEFGQMSFDHQQLAKLIQESPTVELKDKLECELEALVGRMEAKANQITKVRKYQAQLEKQKLEKQKKELKATKKTLDEERNSSSRSGITGTTNKKDFMKLRPGEKRRKNLQLLKDMQSIQNSLQSSSLCWDY.

Over residues 1–17 (MAAASVSAASGSHLSNS) the composition is skewed to low complexity. Disordered stretches follow at residues 1–34 (MAAA…HSSS) and 43–62 (KPFL…LAYP). Over residues 18–34 (FAEPSRSNGSMVRHSSS) the composition is skewed to polar residues. Serine 53 and serine 55 each carry phosphoserine. Residues 58 to 239 (TLAYPESNSR…KAAELQTGLE (182 aa)) are centrosome localization domain (CLD). 2 coiled-coil regions span residues 63–242 (ESNS…ETNR) and 392–492 (ELKD…NSLQ). Residues 277 to 491 (GAQPHYRLCL…KDMQSIQNSL (215 aa)) are mediates interaction with microtubules. A compositionally biased stretch (basic and acidic residues) spans 434–450 (KKELKATKKTLDEERNS). The disordered stretch occupies residues 434–472 (KKELKATKKTLDEERNSSSRSGITGTTNKKDFMKLRPGE). Residues 451–460 (SSRSGITGTT) are compositionally biased toward polar residues. Residues 461–471 (NKKDFMKLRPG) are compositionally biased toward basic and acidic residues.

Belongs to the translokin family. In terms of assembly, homodimer and homooligomer. Interacts with microtubules. Interacts with FGF2 and RAP80. Does not interact with FGF1 or FGF2 isoform 24 kDa. In terms of tissue distribution, ubiquitous.

The protein localises to the nucleus. It is found in the cytoplasm. Its subcellular location is the cytoskeleton. The protein resides in the microtubule organizing center. It localises to the centrosome. Centrosomal protein which may be required for microtubule attachment to centrosomes. May act by forming ring-like structures around microtubules. Mediates nuclear translocation and mitogenic activity of the internalized growth factor FGF2, but that of FGF1. The sequence is that of Centrosomal protein of 57 kDa (CEP57) from Homo sapiens (Human).